A 1033-amino-acid polypeptide reads, in one-letter code: SIT4-associating protein SAP190 (1033 aa).

Disordered stretches follow at residues 32–82 (DQDD…TTES), 147–213 (PEII…QVET), 768–813 (FGND…HDSG), and 828–1033 (ENEE…KEAF). The segment covering 158 to 170 (ILIERDRKDKKED) has biased composition (basic and acidic residues). A compositionally biased stretch (acidic residues) spans 171-182 (AEEGGDSEETTN). Over residues 183–195 (DSDHDSGDERSVD) the composition is skewed to basic and acidic residues. Residue Ser-774 is modified to Phosphoserine. Acidic residues-rich tracts occupy residues 784 to 793 (SEDIIGDTEG) and 828 to 838 (ENEEDYAEYSD). Ser-857, Ser-862, and Ser-892 each carry phosphoserine. The segment covering 858 to 879 (DDGKSKSAESEFTDKISEHRDG) has biased composition (basic and acidic residues). The segment covering 909–924 (SRSQPSDPKLQDQNIF) has biased composition (polar residues). Over residues 932-944 (GVGDDDDYMDPND) the composition is skewed to acidic residues. Phosphothreonine is present on Thr-990. Position 991 is a phosphoserine (Ser-991). The segment covering 1000-1018 (ISSDEEDSEDEDEENDMGN) has biased composition (acidic residues).

Belongs to the SAPS family. As to quaternary structure, associates with the SIT4 protein phosphatase catalytic subunit in a cell-cycle-dependent manner. In terms of processing, hyperphosphorylated in the absence of SIT4.

The protein resides in the cytoplasm. In terms of biological role, positive regulator of protein phosphatase SIT4. Involved in the general amino acid control (GAAC) response regulated by TOR. Involved in the dephosphorylation of the elongator complex subunit IKI3. The polypeptide is SIT4-associating protein SAP190 (SAP190) (Saccharomyces cerevisiae (strain AWRI1631) (Baker's yeast)).